We begin with the raw amino-acid sequence, 230 residues long: UPF0500 protein C1orf216 homolog (230 aa).

The interval 1–103 is disordered; the sequence is MFAAIQPGLA…AEPEKLSGAS (103 aa). The span at 60 to 73 shows a compositional bias: polar residues; sequence RSSSESPSDNQVFQ. Residues 85 to 94 show a composition bias toward low complexity; that stretch reads PPEGAEIPGA.

It belongs to the UPF0500 family.

This Mus musculus (Mouse) protein is UPF0500 protein C1orf216 homolog.